Here is a 337-residue protein sequence, read N- to C-terminus: PHD finger protein 11 (337 aa).

Residues 25–61 (KRTCALCPEGHEWSQIYFSPSGNIVAHENCLLYSSGL) form a C2HC pre-PHD-type zinc finger. The PHD-type zinc finger occupies 91-143 (LKCSFCNKGGATVGCDLWFCKKSYHYVCAKKDQAILQVDGNHGTYKLFCPEHS). 2 disordered regions span residues 145 to 196 (EQEE…HGHT) and 301 to 337 (GDLDCSSSTSGSLLPPEDHQVRSQESPEVQAGSGDSL). Residues 187-196 (HMTEEPHGHT) show a composition bias toward basic and acidic residues. Polar residues-rich tracts occupy residues 301 to 312 (GDLDCSSSTSGS) and 323 to 337 (SQESPEVQAGSGDSL).

Interacts with BRCA1 and RELA.

It is found in the nucleus. In terms of biological role, positive regulator of Th1-type cytokine gene expression. The polypeptide is PHD finger protein 11 (Phf11) (Mus musculus (Mouse)).